The sequence spans 74 residues: U3-agatoxin-Ao1f (74 aa).

A signal peptide spans 1–20; that stretch reads MRAIISLLLISTMVFGVIEA. Positions 21–34 are excised as a propeptide; it reads VSLEEGLKIFEGER. 4 cysteine pairs are disulfide-bonded: cysteine 37/cysteine 53, cysteine 44/cysteine 58, cysteine 52/cysteine 68, and cysteine 60/cysteine 66. An Asparagine amide modification is found at asparagine 72.

This sequence belongs to the neurotoxin 07 (Beta/delta-agtx) family. 03 (aga-4) subfamily. Aga sub-subfamily. Expressed by the venom gland.

It localises to the secreted. Its function is as follows. Insecticidal neurotoxin that modulates the insect Nav channel (DmNaV1/tipE (para/tipE)) in a unique manner, with both the activation and inactivation processes being affected. The voltage dependence of activation is shifted toward more hyperpolarized potentials (analogous to site 4 toxins) and a non-inactivating persistent sodium current is induced (site 3-like action). Interestingly, both effects take place in a voltage-dependent manner, producing a bell-shaped curve between -80 and 0 mV. In vivo, induces an irreversible spastic paralysis when injected into insects. This is U3-agatoxin-Ao1f from Agelena orientalis (Funnel-web spider).